The chain runs to 408 residues: (R)-2-hydroxyisocaproyl-CoA dehydratase alpha subunit (408 aa).

Glu55 is a binding site for substrate. [4Fe-4S] cluster is bound by residues Cys84, Cys117, and Cys346.

It belongs to the FldB/FldC dehydratase alpha/beta subunit family. As to quaternary structure, part of the heterodimeric complex HadBC composed of (R)-2-hydroxyisocaproyl-CoA dehydratase alpha (HadB) and beta (HadC) subunit. It depends on [4Fe-4S] cluster as a cofactor.

The catalysed reaction is (R)-2-hydroxy-4-methylpentanoyl-CoA = 4-methylpent-2-enoyl-CoA + H2O. Its activity is regulated as follows. Activated by HadI. Functionally, involved in the reductive branch of L-leucine fermentation. Catalyzes the irreversible beta/alpha-elimination of water from (R)-2-hydroxyisocaproyl-CoA to yield isocaprenoyl-CoA. This beta/alpha-dehydration depends on the reductive formation of ketyl radicals on the substrate generated by injection of a single electron from the ATP-dependent activator protein HadI. The enzyme is specific for the R-isomer. This is (R)-2-hydroxyisocaproyl-CoA dehydratase alpha subunit from Clostridioides difficile (Peptoclostridium difficile).